The sequence spans 732 residues: Catalase-peroxidase (732 aa).

Residues 97–220 constitute a cross-link (tryptophyl-tyrosyl-methioninium (Trp-Tyr) (with M-246)); sequence WHSAGTYRTG…LAAVQMGLIY (124 aa). Residue histidine 98 is the Proton acceptor of the active site. Positions 220–246 form a cross-link, tryptophyl-tyrosyl-methioninium (Tyr-Met) (with W-97); that stretch reads YVNPEGPDGKPDPVAAGKDIRETFGRM. Residue histidine 261 coordinates heme b.

The protein belongs to the peroxidase family. Peroxidase/catalase subfamily. Homodimer or homotetramer. Requires heme b as cofactor. In terms of processing, formation of the three residue Trp-Tyr-Met cross-link is important for the catalase, but not the peroxidase activity of the enzyme.

The catalysed reaction is H2O2 + AH2 = A + 2 H2O. It carries out the reaction 2 H2O2 = O2 + 2 H2O. In terms of biological role, bifunctional enzyme with both catalase and broad-spectrum peroxidase activity. In Chlorobium phaeobacteroides (strain BS1), this protein is Catalase-peroxidase.